Reading from the N-terminus, the 632-residue chain is Deoxynucleoside triphosphate triphosphohydrolase SAMHD1 (632 aa).

Positions 1–22 (MKGINGAKRVRHDASPSAQDGY) are disordered. The SAM domain maps to 44–107 (WDVEEVCLFL…LSCLRMLCQN (64 aa)). GTP contacts are provided by lysine 113 and valine 114. Residue asparagine 116 coordinates dGTP. GTP contacts are provided by aspartate 134, glutamine 139, and arginine 142. Residues glutamine 146, leucine 147, valine 153, and arginine 161 each coordinate dGTP. Glutamine 146 lines the dATP pocket. Glutamine 146 contributes to the dCTP binding site. Residue glutamine 146 coordinates dTTP. Arginine 161 provides a ligand contact to dATP. Arginine 161 contacts dCTP. Arginine 161 is a binding site for dTTP. In terms of domain architecture, HD spans 161 to 321 (RFEHSIGVGY…GIDVDKWDYF (161 aa)). The Mn(2+) site is built by histidine 164, histidine 203, and aspartate 204. DATP is bound by residues histidine 207 and histidine 212. Histidine 207 and histidine 212 together coordinate dCTP. The dTTP site is built by histidine 207 and histidine 212. The active site involves histidine 230. Residue aspartate 316 coordinates Mn(2+). DGTP contacts are provided by lysine 317, tyrosine 320, aspartate 324, arginine 338, arginine 357, lysine 359, asparagine 363, arginine 371, tyrosine 379, glutamine 380, histidine 381, and lysine 382. The dATP site is built by lysine 317, tyrosine 320, and aspartate 324. Residues lysine 317, tyrosine 320, and aspartate 324 each coordinate dCTP. The dTTP site is built by lysine 317, tyrosine 320, and aspartate 324. Arginine 371 is a binding site for dATP. Position 371 (arginine 371) interacts with dCTP. Residue glutamine 380 participates in dATP binding. Glutamine 380 lines the dCTP pocket. Glutamine 380 contacts dTTP. GTP-binding residues include arginine 456, lysine 460, and lysine 529. A dGTP-binding site is contributed by lysine 529.

Belongs to the SAMHD1 family. Homodimer; in absence of GTP and dNTP. Homotetramer; in GTP- and dNTP-bound form. Interacts with rbbp8/CtIP. Zn(2+) serves as cofactor.

It localises to the nucleus. It is found in the chromosome. The enzyme catalyses a 2'-deoxyribonucleoside 5'-triphosphate + H2O = a 2'-deoxyribonucleoside + triphosphate + H(+). The catalysed reaction is dATP + H2O = 2'-deoxyadenosine + triphosphate + H(+). It catalyses the reaction dCTP + H2O = 2'-deoxycytidine + triphosphate + H(+). It carries out the reaction dGTP + H2O = 2'-deoxyguanosine + triphosphate + H(+). The enzyme catalyses dTTP + H2O = thymidine + triphosphate + H(+). Its activity is regulated as follows. Allosterically activated and regulated via the combined actions of GTP and dNTPs (dATP, dGTP, dTTP and dCTP): Allosteric site 1 binds GTP, while allosteric site 2 binds dNTP. Allosteric activation promotes the formation of highly active homotetramers. Its function is as follows. Protein that acts both as a host restriction factor involved in defense response to virus and as a regulator of DNA end resection at stalled replication forks. Has deoxynucleoside triphosphate (dNTPase) activity, which is required to restrict infection by viruses: dNTPase activity reduces cellular dNTP levels to levels too low for retroviral reverse transcription to occur, blocking early-stage virus replication in dendritic and other myeloid cells. Functions during S phase at stalled DNA replication forks to promote the resection of gapped or reversed forks: acts by stimulating the exonuclease activity of mre11, activating the ATR-CHK1 pathway and allowing the forks to restart replication. Ability to promote DNA end resection at stalled replication forks is independent of dNTPase activity. This is Deoxynucleoside triphosphate triphosphohydrolase SAMHD1 from Xenopus laevis (African clawed frog).